Reading from the N-terminus, the 215-residue chain is Nucleoside triphosphate pyrophosphatase (215 aa).

Catalysis depends on Asp77, which acts as the Proton acceptor.

The protein belongs to the Maf family. It depends on a divalent metal cation as a cofactor.

It localises to the cytoplasm. The catalysed reaction is a ribonucleoside 5'-triphosphate + H2O = a ribonucleoside 5'-phosphate + diphosphate + H(+). The enzyme catalyses a 2'-deoxyribonucleoside 5'-triphosphate + H2O = a 2'-deoxyribonucleoside 5'-phosphate + diphosphate + H(+). In terms of biological role, nucleoside triphosphate pyrophosphatase. May have a dual role in cell division arrest and in preventing the incorporation of modified nucleotides into cellular nucleic acids. This is Nucleoside triphosphate pyrophosphatase from Rickettsia peacockii (strain Rustic).